A 328-amino-acid chain; its full sequence is Aspartate carbamoyltransferase catalytic subunit (328 aa).

2 residues coordinate carbamoyl phosphate: R70 and T71. K98 provides a ligand contact to L-aspartate. Residues R120, H150, and Q153 each contribute to the carbamoyl phosphate site. Residues R183 and R238 each coordinate L-aspartate. Carbamoyl phosphate contacts are provided by G279 and P280.

The protein belongs to the aspartate/ornithine carbamoyltransferase superfamily. ATCase family. In terms of assembly, heterododecamer (2C3:3R2) of six catalytic PyrB chains organized as two trimers (C3), and six regulatory PyrI chains organized as three dimers (R2).

The enzyme catalyses carbamoyl phosphate + L-aspartate = N-carbamoyl-L-aspartate + phosphate + H(+). It functions in the pathway pyrimidine metabolism; UMP biosynthesis via de novo pathway; (S)-dihydroorotate from bicarbonate: step 2/3. Catalyzes the condensation of carbamoyl phosphate and aspartate to form carbamoyl aspartate and inorganic phosphate, the committed step in the de novo pyrimidine nucleotide biosynthesis pathway. In Methylococcus capsulatus (strain ATCC 33009 / NCIMB 11132 / Bath), this protein is Aspartate carbamoyltransferase catalytic subunit.